The sequence spans 144 residues: uncharacterized protein (144 aa).

Residues 1–23 form the signal peptide; it reads MVIPLRNKYGILFLIAVCIMVSG. The interval 119-144 is disordered; that stretch reads QNGQRKTMTRIESKTGREEKDEKSKS. Over residues 127–144 the composition is skewed to basic and acidic residues; the sequence is TRIESKTGREEKDEKSKS.

This is an uncharacterized protein from Bacillus subtilis (strain 168).